A 1363-amino-acid chain; its full sequence is Zinc finger protein 541 (1363 aa).

2 disordered regions span residues 1-23 (MEPY…SFSE) and 106-137 (LGAL…SPQN). C2H2-type zinc fingers lie at residues 140 to 162 (LDCS…YLTH), 168 to 190 (HVCK…MLTH), and 196 to 221 (FVCI…EVQH). Disordered stretches follow at residues 232-269 (EEEA…GSVL), 286-387 (KIPS…GWPE), 440-532 (VASR…PGGL), and 574-741 (QVAT…GYRL). The span at 311–321 (SLGSSSCTPAS) shows a compositional bias: polar residues. Basic and acidic residues predominate over residues 335–345 (EETHPPRKEAA). Residues 453–465 (PSSTPTSVEPSPS) show a composition bias toward low complexity. Residues 597 to 608 (GPWPPQTLPPAP) show a composition bias toward pro residues. Low complexity predominate over residues 659-670 (PPSLTGPGLLPS). The C2H2-type 4 zinc finger occupies 838-860 (FVCKNCSQMFYTEKGLSSHMCFH). Positions 935–978 (QGQEKDGEERDSKESCQYRKRKKRPQPKALFAPPAPSALGEPGP) are disordered. Over residues 937-951 (QEKDGEERDSKESCQ) the composition is skewed to basic and acidic residues. Residues 1063 to 1155 (PHINVGSRFQ…VALETLLLRG (93 aa)) enclose the ELM2 domain. The region spanning 1170–1221 (TGSDIWTPMEKRLFKKAFCAHKKDFYLIHKMIQTKSVAQCVEYYYIWKKMVK) is the SANT domain. The tract at residues 1243–1298 (RTEDKVTCSPRERPTHRPTPELKIKTKSYRRESILHSSPSAAPKRTPEPPGSVESQ) is disordered. Positions 1244–1276 (TEDKVTCSPRERPTHRPTPELKIKTKSYRRESI) are enriched in basic and acidic residues. The C2H2-type 5 zinc finger occupies 1301–1323 (FPCRECERVFDKIKSRNAHMKRH). The interval 1343–1363 (LKEEEEEEEEELGADMGPLQW) is disordered. Acidic residues predominate over residues 1345 to 1355 (EEEEEEEEELG).

Interacts with DNTTIP1. Identified in a complex with KCTD19, HDAC1 and HSPA2. Identified in a complex with HDAC1, HDAC2, DNTTIP1 and KCTD19. Identified in a complex with KCTD19 and HDAC1. Germ-cell-specific. Specifically present in testicular spermatogenic cells, but not in testicular and mature sperm. During spermatogenesis, it is present in spermatocytes and round spermatids only (at protein level).

It localises to the nucleus. Functionally, transcription regulator which is essential for male fertility and for the completion of meiotic prophase in spermatocytes. Regulates progression of the pachytene stage of meiotic prophase by activating the expression of genes involved in meiosis and post-meiosis during spermatogenesis. Maintains the repression of pre-pachytene transcriptional programs, including meiotic double-strand breaks (DSB) formation genes in pachytene spermatocytes and suppresses aberrant DSB formation after mid-pachytene, thus ensuring meiosis progression. The polypeptide is Zinc finger protein 541 (Znf541) (Mus musculus (Mouse)).